The following is a 94-amino-acid chain: MLKNRELLKIFEQASHMMKLIEEHCICDCIWMEWEDLEAKTLDRRPPEQTRRERCSCGNGKRWAKPKITTEKKNHPDFMIDWMYFETPLSIQMK.

As to expression, expressed in heart.

This is an uncharacterized protein from Homo sapiens (Human).